The primary structure comprises 189 residues: Elongation factor P (189 aa).

This sequence belongs to the elongation factor P family.

The protein resides in the cytoplasm. It functions in the pathway protein biosynthesis; polypeptide chain elongation. Its function is as follows. Involved in peptide bond synthesis. Stimulates efficient translation and peptide-bond synthesis on native or reconstituted 70S ribosomes in vitro. Probably functions indirectly by altering the affinity of the ribosome for aminoacyl-tRNA, thus increasing their reactivity as acceptors for peptidyl transferase. In Orientia tsutsugamushi (strain Ikeda) (Rickettsia tsutsugamushi), this protein is Elongation factor P.